We begin with the raw amino-acid sequence, 163 residues long: Allophycocyanin alpha-B chain (163 aa).

N71 carries the N4-methylasparagine modification. Position 81 (C81) interacts with (2R,3E)-phycocyanobilin.

It belongs to the phycobiliprotein family. Post-translationally, contains one covalently linked bilin chromophore.

It localises to the plastid. Its subcellular location is the chloroplast thylakoid membrane. Allophycocyanin is a photosynthetic bile pigment-protein complex with maximum absorption at approximately 650 nanometers. This Cyanidium caldarium (Red alga) protein is Allophycocyanin alpha-B chain (apcD).